Here is a 683-residue protein sequence, read N- to C-terminus: Actin-binding LIM protein 3 (683 aa).

Met1 carries the N-acetylmethionine modification. LIM zinc-binding domains lie at 21 to 80 (IQCY…LYGT), 80 to 140 (TRCD…MASS), 149 to 208 (SHCA…QFGI), and 208 to 268 (IKCE…ARAE). Phosphoserine is present on residues Ser277, Ser280, Ser282, Ser286, Ser290, Ser337, Ser372, and Ser373. Residues 372-472 (SSPGYIDSPT…EDISQTSKYS (101 aa)) are disordered. Tyr376 carries the post-translational modification Phosphotyrosine. Ser379 and Ser388 each carry phosphoserine. Composition is skewed to polar residues over residues 380-393 (PTYS…TFSR), 406-426 (GRSS…TSYQ), and 454-471 (STAT…TSKY). Phosphoserine occurs at positions 493, 503, and 504. Thr543 is modified (phosphothreonine). 3 positions are modified to phosphoserine: Ser567, Ser576, and Ser607. An HP domain is found at 615–683 (MREYKIYPYE…NELKKQARLF (69 aa)). Arg631 carries the omega-N-methylarginine modification.

As to quaternary structure, directly interacts with F-actin and ABRA. In terms of tissue distribution, expressed predominantly in heart and brain.

The protein localises to the cytoplasm. Functionally, may act as scaffold protein. May stimulate ABRA activity and ABRA-dependent SRF transcriptional activity. This is Actin-binding LIM protein 3 (ABLIM3) from Homo sapiens (Human).